Reading from the N-terminus, the 211-residue chain is MGKKPVVIGVAGGSGSGKTSVARAIYDHFGDRSILVLEQDFYYKDQSHLPFEERLKTNYDHPLAFDNDLLIEHIHKLLRYEPIDKPVYDYTLHTRSSDVIRVEPKDVIIVEGILVLEDERLRNLMDIKVYVDTDPDIRIIRRLIRDIKERGRTFDSVIEQYLSVVRPMHNQFVEPTKRYADVIIPEGGQNVVAIDLMVAKIRTVLEQKAVL.

12–19 (GGSGSGKT) lines the ATP pocket.

This sequence belongs to the uridine kinase family.

The protein resides in the cytoplasm. The catalysed reaction is uridine + ATP = UMP + ADP + H(+). The enzyme catalyses cytidine + ATP = CMP + ADP + H(+). Its pathway is pyrimidine metabolism; CTP biosynthesis via salvage pathway; CTP from cytidine: step 1/3. The protein operates within pyrimidine metabolism; UMP biosynthesis via salvage pathway; UMP from uridine: step 1/1. This is Uridine kinase from Geobacillus kaustophilus (strain HTA426).